The primary structure comprises 342 residues: Anthranilate phosphoribosyltransferase (342 aa).

5-phospho-alpha-D-ribose 1-diphosphate contacts are provided by residues Gly-80, 83-84 (GD), Thr-88, 90-93 (NIST), 108-116 (KHGNRAVSS), and Ser-120. An anthranilate-binding site is contributed by Gly-80. Ser-92 provides a ligand contact to Mg(2+). Asn-111 contributes to the anthranilate binding site. Arg-166 contacts anthranilate. Mg(2+) contacts are provided by Asp-225 and Glu-226.

This sequence belongs to the anthranilate phosphoribosyltransferase family. In terms of assembly, homodimer. Mg(2+) is required as a cofactor.

It carries out the reaction N-(5-phospho-beta-D-ribosyl)anthranilate + diphosphate = 5-phospho-alpha-D-ribose 1-diphosphate + anthranilate. Its pathway is amino-acid biosynthesis; L-tryptophan biosynthesis; L-tryptophan from chorismate: step 2/5. Its function is as follows. Catalyzes the transfer of the phosphoribosyl group of 5-phosphorylribose-1-pyrophosphate (PRPP) to anthranilate to yield N-(5'-phosphoribosyl)-anthranilate (PRA). This is Anthranilate phosphoribosyltransferase from Halalkalibacterium halodurans (strain ATCC BAA-125 / DSM 18197 / FERM 7344 / JCM 9153 / C-125) (Bacillus halodurans).